Here is a 248-residue protein sequence, read N- to C-terminus: Ankyrin repeat domain-containing protein 45 (248 aa).

Composition is skewed to acidic residues over residues 1–10 (MEPEETLESE) and 22–33 (EYEESQEAEETG). A disordered region spans residues 1–42 (MEPEETLESESSEKSLFSSQQEYEESQEAEETGAENPLLQPT). 2 ANK repeats span residues 75 to 104 (VGRN…NLNE) and 108 to 137 (RGYT…DIEA).

The protein localises to the cytoplasm. It is found in the midbody. It localises to the midbody ring. The protein resides in the cleavage furrow. Functionally, may play a role during cell division. The protein is Ankyrin repeat domain-containing protein 45 (Ankrd45) of Mus musculus (Mouse).